Consider the following 453-residue polypeptide: Bifunctional protein GlmU (453 aa).

The tract at residues 1 to 227 (MTQDIVILAA…EAEVAGVNDR (227 aa)) is pyrophosphorylase. UDP-N-acetyl-alpha-D-glucosamine-binding positions include 8–11 (LAAG), Lys22, Gln73, 78–79 (GT), 100–102 (YGD), Gly137, Glu152, Asn167, and Asn225. A Mg(2+)-binding site is contributed by Asp102. Asn225 provides a ligand contact to Mg(2+). Positions 228-248 (VQLAALERELQNQQAVSLMQN) are linker. Residues 249 to 453 (GATLLDPSRI…KDNWPRPIKK (205 aa)) form an N-acetyltransferase region. The UDP-N-acetyl-alpha-D-glucosamine site is built by Arg331 and Lys349. His361 acts as the Proton acceptor in catalysis. Residues Tyr364 and Asn375 each coordinate UDP-N-acetyl-alpha-D-glucosamine. Acetyl-CoA is bound by residues Ala378, 384 to 385 (NY), Ser403, Ala421, and Arg438.

The protein in the N-terminal section; belongs to the N-acetylglucosamine-1-phosphate uridyltransferase family. In the C-terminal section; belongs to the transferase hexapeptide repeat family. In terms of assembly, homotrimer. Requires Mg(2+) as cofactor.

The protein localises to the cytoplasm. It carries out the reaction alpha-D-glucosamine 1-phosphate + acetyl-CoA = N-acetyl-alpha-D-glucosamine 1-phosphate + CoA + H(+). The enzyme catalyses N-acetyl-alpha-D-glucosamine 1-phosphate + UTP + H(+) = UDP-N-acetyl-alpha-D-glucosamine + diphosphate. It functions in the pathway nucleotide-sugar biosynthesis; UDP-N-acetyl-alpha-D-glucosamine biosynthesis; N-acetyl-alpha-D-glucosamine 1-phosphate from alpha-D-glucosamine 6-phosphate (route II): step 2/2. It participates in nucleotide-sugar biosynthesis; UDP-N-acetyl-alpha-D-glucosamine biosynthesis; UDP-N-acetyl-alpha-D-glucosamine from N-acetyl-alpha-D-glucosamine 1-phosphate: step 1/1. The protein operates within bacterial outer membrane biogenesis; LPS lipid A biosynthesis. Catalyzes the last two sequential reactions in the de novo biosynthetic pathway for UDP-N-acetylglucosamine (UDP-GlcNAc). The C-terminal domain catalyzes the transfer of acetyl group from acetyl coenzyme A to glucosamine-1-phosphate (GlcN-1-P) to produce N-acetylglucosamine-1-phosphate (GlcNAc-1-P), which is converted into UDP-GlcNAc by the transfer of uridine 5-monophosphate (from uridine 5-triphosphate), a reaction catalyzed by the N-terminal domain. The sequence is that of Bifunctional protein GlmU from Marinomonas sp. (strain MWYL1).